The following is a 36-amino-acid chain: U-limacoditoxin(7)-Dv63 (36 aa).

A signal peptide spans 1 to 19 (MFKPRVILLITIIAVFSEF).

It belongs to the limacoditoxin-7 family. In terms of tissue distribution, expressed by the venom secretory cell of the spine. The spine is a cuticular structure containing a single large nucleated venom-secreting cell at its base. It is an independent unit capable of producing, storing and injecting venom. On the back of D.vulnerans caterpillars, spines are grouped together by 50 to 100 to form scoli, of which there are eight in D.vulnerans.

It localises to the secreted. Functionally, peptide with insecticidal and antiparasitic activities. Induces irreversible paralysis in D.melanogaster when tested at high doses. It shows a moderate antiparasitic activity against the major pathogenic nematode of ruminants (H.contortus, EC(50)=41.3 uM). Does not show antimicrobial activities. Does not induce increase in intracellular calcium in mouse DRG neurons, suggesting that it does not induce pain. The sequence is that of U-limacoditoxin(7)-Dv63 from Doratifera vulnerans (Mottled cup moth).